Here is a 388-residue protein sequence, read N- to C-terminus: bZIP transcription factor 1-D (388 aa).

Disordered regions lie at residues 1–49 (MGSS…PIPP), 103–249 (FAPY…GPTT), 261–316 (TASS…RKQA), and 348–388 (ELLS…KDTN). 2 stretches are compositionally biased toward low complexity: residues 23-33 (PPATSSTATPT) and 117-129 (AAGT…TAGG). The segment covering 169 to 179 (SGASANGTISQ) has biased composition (polar residues). Positions 180-193 (SGESGSESSSEGSE) are enriched in low complexity. A compositionally biased stretch (polar residues) spans 214 to 231 (RSSQNGVSPSPSQAQLKQ). Residues 293-356 (ELKRQKRKQS…DELLSKNSSL (64 aa)) form the bZIP domain. The interval 295–314 (KRQKRKQSNRDSARRSRLRK) is basic motif. Positions 302–316 (SNRDSARRSRLRKQA) are enriched in basic and acidic residues. The leucine-zipper stretch occupies residues 321 to 356 (LAQRAEVLKQENASLKDEVSRIRKEYDELLSKNSSL). 2 stretches are compositionally biased toward basic and acidic residues: residues 359 to 369 (NVGDKQHKTDE) and 375 to 388 (KLQH…KDTN).

It belongs to the bZIP family. In terms of tissue distribution, highly expressed in roots and at lower levels in stems and leaves.

The protein localises to the nucleus. Functionally, probable transcription factor that may be involved in responses to fungal pathogen infection and abiotic stresses. The sequence is that of bZIP transcription factor 1-D from Triticum aestivum (Wheat).